The following is a 119-amino-acid chain: Large ribosomal subunit protein uL18 (119 aa).

The interval 1–24 (MITKQDKNQVRKKRHARVRSKISG) is disordered. Over residues 10–20 (VRKKRHARVRS) the composition is skewed to basic residues.

It belongs to the universal ribosomal protein uL18 family. Part of the 50S ribosomal subunit; part of the 5S rRNA/L5/L18/L25 subcomplex. Contacts the 5S and 23S rRNAs.

Its function is as follows. This is one of the proteins that bind and probably mediate the attachment of the 5S RNA into the large ribosomal subunit, where it forms part of the central protuberance. The protein is Large ribosomal subunit protein uL18 of Lysinibacillus sphaericus (strain C3-41).